The primary structure comprises 546 residues: EH domain-containing protein 2 (546 aa).

EF-hand domains are found at residues 15-50 (EHQKIYKEWFNIADSDGDGRVSGNDATKFFAMSKLS) and 51-84 (RQELKQVWAVADSKRQGFLGLSEFITAMKLVSLA). Residues 16 to 94 (HQKIYKEWFN…QEGHEITSDL (79 aa)) form the EH domain. Ca(2+)-binding residues include aspartate 28, aspartate 30, aspartate 32, arginine 34, aspartate 39, aspartate 62, and glutamate 73. A Dynamin-type G domain is found at 194–430 (FDAKPMVMLL…LLADLMDVPK (237 aa)). Residues 204–211 (GQYSTGKT) are G1 motif. 204–211 (GQYSTGKT) lines the GTP pocket. Positions 230 to 231 (EP) are G2 motif. The interval 292–295 (DTPG) is G3 motif. Residues 292-296 (DTPGV) and lysine 359 contribute to the GTP site. Positions 358 to 361 (NKAD) are G4 motif. Position 382 (valine 382) is a region of interest, G5 motif. 395–398 (SFND) serves as a coordination point for GTP. The Nuclear localization signal signature appears at 429 to 436 (PKKACDRK). Positions 467-490 (KSKAQQRLMDNLEEEFGKVQREFH) form a coiled coil.

This sequence belongs to the TRAFAC class dynamin-like GTPase superfamily. Dynamin/Fzo/YdjA family. EHD subfamily. Homooligomer, and heterooligomer with EHD1. Interacts with AP-4 complex subunit sigma (At2g19790).

Its subcellular location is the endosome membrane. The protein resides in the cell membrane. It localises to the nucleus. The protein localises to the cytoplasm. It catalyses the reaction GTP + H2O = GDP + phosphate + H(+). Functionally, involved in endocytosis negative regulation, probably by influencing actin organization. Acts in early endocytic membrane fusion and membrane trafficking of recycling endosomes. Exhibits an inhibitory effect on endocytosis when over-expressed. In Arabidopsis thaliana (Mouse-ear cress), this protein is EH domain-containing protein 2.